A 313-amino-acid polypeptide reads, in one-letter code: 4-diphosphocytidyl-2-C-methyl-D-erythritol kinase (313 aa).

The active site involves Lys10. Residue 95–105 (PVTAGLGGGSS) participates in ATP binding. Asp136 is an active-site residue. The segment at 289–313 (HPRVSPWRSPRSASSPSTRRSSRPT) is disordered. Positions 292–307 (VSPWRSPRSASSPSTR) are enriched in low complexity.

The protein belongs to the GHMP kinase family. IspE subfamily.

It catalyses the reaction 4-CDP-2-C-methyl-D-erythritol + ATP = 4-CDP-2-C-methyl-D-erythritol 2-phosphate + ADP + H(+). Its pathway is isoprenoid biosynthesis; isopentenyl diphosphate biosynthesis via DXP pathway; isopentenyl diphosphate from 1-deoxy-D-xylulose 5-phosphate: step 3/6. Functionally, catalyzes the phosphorylation of the position 2 hydroxy group of 4-diphosphocytidyl-2C-methyl-D-erythritol. The chain is 4-diphosphocytidyl-2-C-methyl-D-erythritol kinase from Anaeromyxobacter dehalogenans (strain 2CP-C).